The primary structure comprises 205 residues: DNA-directed RNA polymerase RPB5 homolog (205 aa).

This sequence belongs to the archaeal RpoH/eukaryotic RPB5 RNA polymerase subunit family. In terms of assembly, part of the viral DNA-directed RNA polymerase that consists of 8 polII-like subunits (RPB1, RPB2, RPB3, RPB5, RPB6, RPB7, RPB9, RPB10), a capping enzyme and a termination factor.

Its subcellular location is the host cytoplasm. The protein resides in the virion. Component of the DNA-directed RNA polymerase (RNAP) that catalyzes the transcription in the cytoplasm of viral DNA into RNA using the four ribonucleoside triphosphates as substrates. The chain is DNA-directed RNA polymerase RPB5 homolog from Ornithodoros (relapsing fever ticks).